The following is a 216-amino-acid chain: Probable transaldolase (216 aa).

Catalysis depends on K83, which acts as the Schiff-base intermediate with substrate.

It belongs to the transaldolase family. Type 3B subfamily.

The protein resides in the cytoplasm. It carries out the reaction D-sedoheptulose 7-phosphate + D-glyceraldehyde 3-phosphate = D-erythrose 4-phosphate + beta-D-fructose 6-phosphate. The protein operates within carbohydrate degradation; pentose phosphate pathway; D-glyceraldehyde 3-phosphate and beta-D-fructose 6-phosphate from D-ribose 5-phosphate and D-xylulose 5-phosphate (non-oxidative stage): step 2/3. Functionally, transaldolase is important for the balance of metabolites in the pentose-phosphate pathway. The sequence is that of Probable transaldolase from Desulforamulus reducens (strain ATCC BAA-1160 / DSM 100696 / MI-1) (Desulfotomaculum reducens).